Consider the following 518-residue polypeptide: GTPase MTG2, mitochondrial (518 aa).

The transit peptide at 1–23 directs the protein to the mitochondrion; sequence MSIAWSSVFKRELRLERFLPRVY. In terms of domain architecture, Obg spans 89–339; it reads GNFVDVRIVK…QHFLFELKSI (251 aa). The OBG-type G domain occupies 340 to 512; that stretch reads ADLGLIGLPN…LKKKMFKCAR (173 aa). GTP is bound by residues 346–353, 394–398, and 460–463; these read GLPNAGKS, DIPGI, and NKVD.

The protein belongs to the TRAFAC class OBG-HflX-like GTPase superfamily. OBG GTPase family. Interacts with the mitochondrial 54S large ribosomal subunit.

The protein resides in the mitochondrion inner membrane. Required for mitochondrial protein synthesis. May be involved in mitochondrial ribosome biogenesis. The chain is GTPase MTG2, mitochondrial (MTG2) from Saccharomyces cerevisiae (strain ATCC 204508 / S288c) (Baker's yeast).